A 435-amino-acid chain; its full sequence is Serine--tRNA ligase (435 aa).

242–244 (TAE) lines the L-serine pocket. 273–275 (RSE) contacts ATP. An L-serine-binding site is contributed by glutamate 296. Position 360-363 (360-363 (EISS)) interacts with ATP. An L-serine-binding site is contributed by serine 396.

Belongs to the class-II aminoacyl-tRNA synthetase family. Type-1 seryl-tRNA synthetase subfamily. As to quaternary structure, homodimer. The tRNA molecule binds across the dimer.

Its subcellular location is the cytoplasm. The enzyme catalyses tRNA(Ser) + L-serine + ATP = L-seryl-tRNA(Ser) + AMP + diphosphate + H(+). It carries out the reaction tRNA(Sec) + L-serine + ATP = L-seryl-tRNA(Sec) + AMP + diphosphate + H(+). It functions in the pathway aminoacyl-tRNA biosynthesis; selenocysteinyl-tRNA(Sec) biosynthesis; L-seryl-tRNA(Sec) from L-serine and tRNA(Sec): step 1/1. In terms of biological role, catalyzes the attachment of serine to tRNA(Ser). Is also able to aminoacylate tRNA(Sec) with serine, to form the misacylated tRNA L-seryl-tRNA(Sec), which will be further converted into selenocysteinyl-tRNA(Sec). The protein is Serine--tRNA ligase of Vibrio atlanticus (strain LGP32) (Vibrio splendidus (strain Mel32)).